Reading from the N-terminus, the 133-residue chain is uncharacterized protein (133 aa).

The interval 107–133 (TSHHRAAGLQSQHAPGSGRVRITGGKV) is disordered.

This is an uncharacterized protein from Homo sapiens (Human).